The primary structure comprises 221 residues: GTP cyclohydrolase III (221 aa).

The protein belongs to the archaeal-type GTP cyclohydrolase family.

It catalyses the reaction GTP + 3 H2O = 2-amino-5-formylamino-6-(5-phospho-D-ribosylamino)pyrimidin-4(3H)-one + 2 phosphate + 2 H(+). Catalyzes the formation of 2-amino-5-formylamino-6-ribofuranosylamino-4(3H)-pyrimidinone ribonucleotide monophosphate and inorganic phosphate from GTP. Also has an independent pyrophosphate phosphohydrolase activity. The protein is GTP cyclohydrolase III of Pyrobaculum islandicum (strain DSM 4184 / JCM 9189 / GEO3).